Reading from the N-terminus, the 467-residue chain is Cytochrome c-552 (467 aa).

The first 27 residues, 1–27 (MMKKMTGKSFALSALVAASFMAAGAMA), serve as a signal peptide directing secretion. Position 87 (His-87) interacts with heme c. Heme-binding residues include Cys-115, Cys-118, and Lys-119. Residues Cys-153, Cys-156, His-157, Cys-195, Cys-198, and His-199 each contribute to the heme c site. Positions 201, 202, 250, and 252 each coordinate Ca(2+). Tyr-202 is a binding site for substrate. His-253 serves as a coordination point for substrate. Heme c is bound by residues His-264, Cys-271, Cys-274, His-275, His-290, Cys-303, Cys-306, His-307, and His-382.

The protein belongs to the cytochrome c-552 family. Ca(2+) serves as cofactor. Heme c is required as a cofactor.

The protein resides in the periplasm. It catalyses the reaction 6 Fe(III)-[cytochrome c] + NH4(+) + 2 H2O = 6 Fe(II)-[cytochrome c] + nitrite + 8 H(+). Its pathway is nitrogen metabolism; nitrate reduction (assimilation). Functionally, catalyzes the reduction of nitrite to ammonia, consuming six electrons in the process. The chain is Cytochrome c-552 from Shewanella sp. (strain W3-18-1).